Consider the following 944-residue polypeptide: UvrABC system protein A (944 aa).

31 to 38 (GLSGSGKS) contacts ATP. The C4-type zinc finger occupies 253–280 (CPVCGHAISELEPKLFSFNNPAGACPTC). 2 ABC transporter domains span residues 309–586 (WDRR…PDSL) and 606–936 (RNKK…HYLK). ATP is bound at residue 639–646 (GVSGSGKS). Residues 739–765 (CEACQGDGLIKVEMHFLPDIYVPCDVC) form a C4-type zinc finger.

Belongs to the ABC transporter superfamily. UvrA family. In terms of assembly, forms a heterotetramer with UvrB during the search for lesions.

The protein resides in the cytoplasm. Functionally, the UvrABC repair system catalyzes the recognition and processing of DNA lesions. UvrA is an ATPase and a DNA-binding protein. A damage recognition complex composed of 2 UvrA and 2 UvrB subunits scans DNA for abnormalities. When the presence of a lesion has been verified by UvrB, the UvrA molecules dissociate. The polypeptide is UvrABC system protein A (Pseudomonas putida (strain ATCC 47054 / DSM 6125 / CFBP 8728 / NCIMB 11950 / KT2440)).